A 402-amino-acid polypeptide reads, in one-letter code: MGSLLPLLGISVVSAIFFLVLQQPEQSSSAIILSLKKRHGSSSGSSGNQYSSSRPSAGFQGNRSTCSLFLGTWVRDNSYPLYKPADCPGVVEPEFDCQMYGRPDSDYLKYRWQPQNCNLPTFNGAQFLLKMKGKTIMFAGDSLGKNQWESLICLIVSSAPSTRTEMTRGLPLSTFRFLDYGITMSFYKAPFLVDIDAVQGKRVLKLDEISGNANAWHDADLLIFNTGHWWSHTGSMQGWDLIQSGNSYYQDMDRFVAMEKALRTWAYWVETHVDRSRTQVLFLSISPTHDNPSDWAASSSSGSKNCYGETEPITGTAYPVSSYTDQLRSVIVEVLHGMHNPAFLLDITLLSSLRKDGHPSVYSGLISGSQRSRPDQSADCSHWCLPGLPDTWNQLLYTLLIY.

The helical; Signal-anchor for type II membrane protein transmembrane segment at 7-23 (LLGISVVSAIFFLVLQQ) threads the bilayer. A disordered region spans residues 40–60 (GSSSGSSGNQYSSSRPSAGFQ). Positions 41-56 (SSSGSSGNQYSSSRPS) are enriched in low complexity. Positions 140–142 (GDS) match the GDS motif motif. The DCXHWCLPGXXDXWN motif motif lies at 379–393 (DCSHWCLPGLPDTWN).

This sequence belongs to the PC-esterase family. TBL subfamily. Expressed in flowers, siliques, stems and leaves.

It localises to the membrane. Functionally, required for nonhost resistance (NHR) during plant-microbe interactions. Plants mutated in PMR5 are resistant to powdery mildew species. May act as a bridging protein that binds pectin and other cell wall polysaccharides. Probably involved in maintaining esterification of pectins. May be involved in the specific O-acetylation of cell wall polymers. In Arabidopsis thaliana (Mouse-ear cress), this protein is Protein PMR5 (PMR5).